A 473-amino-acid chain; its full sequence is Pup--protein ligase (473 aa).

Position 9 (Glu9) interacts with Mg(2+). ATP is bound at residue Arg54. Residue Tyr56 coordinates Mg(2+). Asp58 functions as the Proton acceptor in the catalytic mechanism. Glu64 is a Mg(2+) binding site. Residues Thr67 and Trp425 each coordinate ATP.

The protein belongs to the Pup ligase/Pup deamidase family. Pup-conjugating enzyme subfamily.

It catalyses the reaction ATP + [prokaryotic ubiquitin-like protein]-L-glutamate + [protein]-L-lysine = ADP + phosphate + N(6)-([prokaryotic ubiquitin-like protein]-gamma-L-glutamyl)-[protein]-L-lysine.. It participates in protein degradation; proteasomal Pup-dependent pathway. The protein operates within protein modification; protein pupylation. Its function is as follows. Catalyzes the covalent attachment of the prokaryotic ubiquitin-like protein modifier Pup to the proteasomal substrate proteins, thereby targeting them for proteasomal degradation. This tagging system is termed pupylation. The ligation reaction involves the side-chain carboxylate of the C-terminal glutamate of Pup and the side-chain amino group of a substrate lysine. This is Pup--protein ligase from Brachybacterium faecium (strain ATCC 43885 / DSM 4810 / JCM 11609 / LMG 19847 / NBRC 14762 / NCIMB 9860 / 6-10).